Reading from the N-terminus, the 86-residue chain is MAHKKAGGSSRNGRDSESKRLGVKVYGGQAILAGGIIVRQRGTRMHPGENVGIGKDHTLFALTDGHVKFTTKGAGKKHMVNVVPAV.

Positions 1–20 (MAHKKAGGSSRNGRDSESKR) are disordered.

It belongs to the bacterial ribosomal protein bL27 family.

The chain is Large ribosomal subunit protein bL27 from Paraburkholderia phymatum (strain DSM 17167 / CIP 108236 / LMG 21445 / STM815) (Burkholderia phymatum).